A 1529-amino-acid polypeptide reads, in one-letter code: MVKSPCSPVTTGKKRCRAKPQKKDEDTTDKGKLDEGPLDATKEMNGVGKGDSRAACKRPRRAAACSDFKEKSVRLSDKSSVVATNGNKMEEEEMDAVKLTKLGPEVQRPCRKLIDFILHDADGKLQPFEMSEIDDFFITALIMPMDDDLEKDRQKGVRCEGFGRIEDWAISGYDEGTAVVWVSTEVADYECVKPAGNYKSYYDHFYEKAQVCVEVYRKLARSVGGNPNLGLEELLASVVRSINAIKGYSGTLSKDFVISNGEFVYNQLIGLDETANTDDEKFATLPVLLALRDGCKSRVEVSKLQPNISNGSLKINDAECKEVSEDDDEKLARLLQQEEEWKMMKQRGKRGTTSQKNVYIKISEAEIANDYPLPAYYKPSSQEMDEYIFDSEDSFYSDVPVRILNNWALYNADSRLIPLELIPMKAGAENDIVVFGSGFMREDDGSCCSTAESAKLSSSSSSNHQDAGVSIYLSPIKEWVIEFGGSMICITIRTDVAWYKLRQPTKQYAPWCEPVLKTARLSVSIITLLKEQSRASKLSFADVIKKVAEFDKGSPAFVSSNVALVERYIVVHGQIILQQFSDFPDETIRRSAFATGLLMKMEQRRHTKLVMKKKVQVMRGENLNPSATMGPASRRKVMRATTTRLINRIWSDYYTHHFPEDSKDADVNEAKEIDDELEENEDEDAEEEAQIEEENVSKTPPSTRSRKLVSQTCKEIRWEGEAIGKTPSGEALYKCAYVRELRINLGRTVALEDDSGELVMCFVEYMFQKLNGAKMVHGRLLQKGSETVLGNAANERDLFLTNECLEFELEDIKELMSVNLQSLPWGHKYRKENAEADRIERAKAEDRKKKGLPMEYLCKSLYWPEKGAFFSLPHDKLGLGNGFCSSCQQKEPDCDELQILSKNSFIYRNITYNVNDYLYIRPDFFSQEEDRATFKGGRNVGLKPYVVCHLLDVHEPAGSRKIHPASTKISVRRFYRPDDISSAKAYVSDIREVYYSENIVKVPVDMIEGKCEVKKKIDISNSDVPVMVEHEFFCEHFYDPATGALKQLPPNVKLMSVQQKATGALKKNKGKQICESDQVDSDKCTKVSKENRLATLDIFAGCGGLSEGLQQAGVSFTKWAIEYEEPAGEAFTKNHPEAAVFVDNCNVILKAIMDKCGDADDCISTSEAAEQAAKFSQDNIMNLPVPGEVEFINGGPPCQGFSGMNRFNQSPWSKVQCEMILAFLSFAEYFRPRFFLLENVRNFVSFNKGQTFRLTVASLLEMGYQVRFGILEAGTFGVAQSRKRAFIWAAAPGETLPDWPEPMHVFASPELKINLPDGKYYAAAKSTAGGAPFRAITVRDTIGDLPKVENGASKLLLEYGGEPISWFQKKIRGNTIALNDHISKEMNELNLIRCQRIPKRPGCDWHDLPDEKVKLSSGQLVDLIPWCLPNTAKRHNQWKGLYGRLDWEGNFPTSVTDPQPMGKVGMCFHPDQDRIITVRECARSQGFPDNYQFAGNIQSKHRQIGNAVPPPLAFALGRKLKEAVDAKRQ.

Disordered stretches follow at residues 1-56 (MVKS…RAAC) and 674-706 (DDEL…TRSR). Over residues 21–35 (QKKDEDTTDKGKLDE) the composition is skewed to basic and acidic residues. The segment covering 674–694 (DDELEENEDEDAEEEAQIEEE) has biased composition (acidic residues). The segment covering 697–706 (SKTPPSTRSR) has biased composition (polar residues). BAH domains follow at residues 741-873 (LRIN…FSLP) and 910-1049 (ITYN…KQLP). Positions 1093–1527 (LATLDIFAGC…RKLKEAVDAK (435 aa)) constitute an SAM-dependent MTase C5-type domain. Residue C1198 is part of the active site.

Belongs to the class I-like SAM-binding methyltransferase superfamily. C5-methyltransferase family. In terms of tissue distribution, expressed in roots and inflorescences. Expressed in roots, panicles, anthers, pistils, endosperm and imbibed embryos. Expressed in tissues containing actively replicating and dividing cells, such as shoot and root meristems.

It is found in the nucleus. The enzyme catalyses a 2'-deoxycytidine in DNA + S-adenosyl-L-methionine = a 5-methyl-2'-deoxycytidine in DNA + S-adenosyl-L-homocysteine + H(+). Major CG methylase that methylates chromatin CpG residues and maintains DNA methylation. Plays a major role in genomic imprinting, regulation of embryogenesis and seed viability. Maintains DNA methylation at the FIE1 gene locus in the embryo. The chain is DNA (cytosine-5)-methyltransferase 1B (MET1B) from Oryza sativa subsp. japonica (Rice).